The chain runs to 187 residues: Peptidyl-tRNA hydrolase (187 aa).

Tyr14 contacts tRNA. The active-site Proton acceptor is His19. Residues Tyr64, Asn66, and Asn112 each coordinate tRNA.

This sequence belongs to the PTH family. In terms of assembly, monomer.

It is found in the cytoplasm. It carries out the reaction an N-acyl-L-alpha-aminoacyl-tRNA + H2O = an N-acyl-L-amino acid + a tRNA + H(+). Hydrolyzes ribosome-free peptidyl-tRNAs (with 1 or more amino acids incorporated), which drop off the ribosome during protein synthesis, or as a result of ribosome stalling. Its function is as follows. Catalyzes the release of premature peptidyl moieties from peptidyl-tRNA molecules trapped in stalled 50S ribosomal subunits, and thus maintains levels of free tRNAs and 50S ribosomes. The polypeptide is Peptidyl-tRNA hydrolase (Clostridium acetobutylicum (strain ATCC 824 / DSM 792 / JCM 1419 / IAM 19013 / LMG 5710 / NBRC 13948 / NRRL B-527 / VKM B-1787 / 2291 / W)).